Reading from the N-terminus, the 357-residue chain is Trans-enoyl reductase buaC (357 aa).

50–53 contributes to the NADP(+) binding site; that stretch reads VDTK. 135–142 is a binding site for substrate; the sequence is TALVSACM. NADP(+)-binding positions include 170 to 173, 193 to 196, Tyr-211, and 258 to 259; these read STAT, SPKN, and LN. 278–282 provides a ligand contact to substrate; sequence ATLIT. Residue 347–348 participates in NADP(+) binding; sequence IS.

Belongs to the zinc-containing alcohol dehydrogenase family. As to quaternary structure, monomer.

The protein operates within mycotoxin biosynthesis. Trans-enoyl reductase; part of the gene cluster that mediates the biosynthesis of burnettramic acids, an unusual class of bolaamphiphilic pyrrolizidinediones that display potent antibacterial, antifungal, and cytotoxic activities. The first step of the biosynthesis of burnettramic acids is the hydroxylation of proline by the proline hydroxylase buaE to generate 4-hydroxyproline. The PKS-NRPS buaA and trans-enoyl reductase buaC construct the highly reduced polyketide chain, and the condensation (C) domain of buaA then catalyzes the amide bond formation with the activated 4-hydroxyproline. This is followed by the R domain releasing the nascent polyketide-peptide directly via a Dieckmann condensation to afford a tetramic acid fused to the hydroxyproline, generating the bicyclic pyrrolidinedione moiety. The cytochrome P450 monooxygenases buaD and buaG are likely responsible for the multiple hydroxylations on the polyketide chain and its terminus, although in the heterologous context, buaD does not appear to be required. Therefore, while buaG may be a multifunctional cytochrome P450 monooxygenase, it cannot be ruled out that the two secondary alcohols on the polyketide chain could have an acetate origin. Finally, the glycosyltransferase buaB transfers beta-D-mannose to the aglycone burnettramic acid A to form burnettramic acid A. Burnettramic acid B is a minor cis-pyrrolizidine epimer of burnettramic acid A and it is likely that small amounts of it form naturally in acidic environments. In Petromyces alliaceus (Aspergillus alliaceus), this protein is Trans-enoyl reductase buaC.